The chain runs to 220 residues: Eukaryotic translation initiation factor 3 subunit B (220 aa).

Positions 1–94 (MPEPIAFDES…LIIELDSAAA (94 aa)) are sufficient for interaction with HCR1 and TIF32. Residues 1–220 (MPEPIAFDES…GVQAWGGERI (220 aa)) form a sufficient for interaction with PIC8 region. Residues 37-120 (HFVICDGAPI…HRLAVNKLPD (84 aa)) form the RRM domain.

This sequence belongs to the eIF-3 subunit B family. In terms of assembly, component of the eukaryotic translation initiation factor 3 (eIF-3) complex.

It is found in the cytoplasm. Functionally, RNA-binding component of the eukaryotic translation initiation factor 3 (eIF-3) complex, which is involved in protein synthesis of a specialized repertoire of mRNAs and, together with other initiation factors, stimulates binding of mRNA and methionyl-tRNAi to the 40S ribosome. The eIF-3 complex specifically targets and initiates translation of a subset of mRNAs involved in cell proliferation. This chain is Eukaryotic translation initiation factor 3 subunit B (TIF32), found in Pichia angusta (Yeast).